A 218-amino-acid chain; its full sequence is uncharacterized protein (218 aa).

This is an uncharacterized protein from Acanthamoeba polyphaga (Amoeba).